We begin with the raw amino-acid sequence, 176 residues long: NAD(P)H-quinone oxidoreductase subunit 6, chloroplastic (176 aa).

5 helical membrane passes run 10–30 (FLLV…VFLP), 33–53 (IYSA…YILL), 61–81 (AQLL…VMFM), 92–112 (LWTV…ISLI), and 153–173 (FLPF…AIAI).

This sequence belongs to the complex I subunit 6 family. NDH is composed of at least 16 different subunits, 5 of which are encoded in the nucleus.

It localises to the plastid. The protein localises to the chloroplast thylakoid membrane. The enzyme catalyses a plastoquinone + NADH + (n+1) H(+)(in) = a plastoquinol + NAD(+) + n H(+)(out). It carries out the reaction a plastoquinone + NADPH + (n+1) H(+)(in) = a plastoquinol + NADP(+) + n H(+)(out). In terms of biological role, NDH shuttles electrons from NAD(P)H:plastoquinone, via FMN and iron-sulfur (Fe-S) centers, to quinones in the photosynthetic chain and possibly in a chloroplast respiratory chain. The immediate electron acceptor for the enzyme in this species is believed to be plastoquinone. Couples the redox reaction to proton translocation, and thus conserves the redox energy in a proton gradient. This Jasminum nudiflorum (Winter jasmine) protein is NAD(P)H-quinone oxidoreductase subunit 6, chloroplastic (ndhG).